The sequence spans 290 residues: Agroclavine dehydrogenase (290 aa).

The protein belongs to the fgaFS/easG family. As to quaternary structure, monomer.

It catalyses the reaction agroclavine + NADP(+) = didehydroagroclavine + NADPH + H(+). Its pathway is alkaloid biosynthesis; ergot alkaloid biosynthesis. In terms of biological role, agroclavine dehydrogenase; part of the gene cluster that mediates the biosynthesis of fungal ergot alkaloid. DmaW catalyzes the first step of ergot alkaloid biosynthesis by condensing dimethylallyl diphosphate (DMAP) and tryptophan to form 4-dimethylallyl-L-tryptophan. The second step is catalyzed by the methyltransferase easF that methylates 4-dimethylallyl-L-tryptophan in the presence of S-adenosyl-L-methionine, resulting in the formation of 4-dimethylallyl-L-abrine. The catalase easC and the FAD-dependent oxidoreductase easE then transform 4-dimethylallyl-L-abrine to chanoclavine-I which is further oxidized by easD in the presence of NAD(+), resulting in the formation of chanoclavine-I aldehyde. Agroclavine dehydrogenase easG then mediates the conversion of chanoclavine-I aldehyde to agroclavine via a non-enzymatic adduct reaction: the substrate is an iminium intermediate that is formed spontaneously from chanoclavine-I aldehyde in the presence of glutathione. The presence of easA is not required to complete this reaction. Further conversion of agroclavine to paspalic acid is a two-step process involving oxidation of agroclavine to elymoclavine and of elymoclavine to paspalic acid, the second step being performed by the elymoclavine oxidase cloA. Paspalic acid is then further converted to D-lysergic acid. Ergopeptines are assembled from D-lysergic acid and three different amino acids by the D-lysergyl-peptide-synthetases composed each of a monomudular and a trimodular nonribosomal peptide synthetase subunit. LpsB and lpsC encode the monomodular subunits responsible for D-lysergic acid activation and incorporation into the ergopeptine backbone. LpsA1 and A2 subunits encode the trimodular nonribosomal peptide synthetase assembling the tripeptide portion of ergopeptines. LpsA1 is responsible for formation of the major ergopeptine, ergotamine, and lpsA2 for alpha-ergocryptine, the minor ergopeptine of the total alkaloid mixture elaborated by C.purpurea. D-lysergyl-tripeptides are assembled by the nonribosomal peptide synthetases and released as N-(D-lysergyl-aminoacyl)-lactams. Cyclolization of the D-lysergyl-tripeptides is performed by the Fe(2+)/2-ketoglutarate-dependent dioxygenase easH which introduces a hydroxyl group into N-(D-lysergyl-aminoacyl)-lactam at alpha-C of the aminoacyl residue followed by spontaneous condensation with the terminal lactam carbonyl group. This Claviceps purpurea (Ergot fungus) protein is Agroclavine dehydrogenase.